The primary structure comprises 1063 residues: Unconventional myosin-Ic (1063 aa).

M1 is subject to N-acetylmethionine. The Myosin motor domain maps to 47-731; it reads GVQDFVLLEN…TLFATEDALE (685 aa). ATP-binding positions include N88, Y96, 139 to 148, and 192 to 196; these read SGESGAGKTE and NDNSS. At K383 the chain carries N6-methyllysine. At S408 the chain carries Phosphoserine. K486 is modified (N6-acetyllysine). S536 is modified (phosphoserine). The segment at 608 to 630 is actin-binding; it reads LLELVEILKSKEPAYVRCIKPND. IQ domains are found at residues 734 to 757 and 758 to 786; these read RQSL…FLRV and KRSA…AAQT. Phosphoserine occurs at positions 864 and 1041. The TH1 domain occupies 885–1059; it reads KDNYPQSVPR…NGHLAVVAPR (175 aa).

This sequence belongs to the TRAFAC class myosin-kinesin ATPase superfamily. Myosin family. As to quaternary structure, interacts (via its IQ motifs) with CABP1 and CIB1; the interaction with CABP1 and CIB1 is calcium-dependent. Interacts (via tail domain) with PLEKHB1 (via PH domain); the interaction is not affected by the presence or absence of calcium and CALM. Interacts with POLR1A. Interacts with POLR2A. Component of the B-WICH complex, at least composed of SMARCA5/SNF2H, BAZ1B/WSTF, SF3B1, DEK, MYO1C, ERCC6, MYBBP1A and DDX21. Interacts (via its IQ motifs) with CALM; this precludes interaction with YWHAB. Interacts with YWHAB; this precludes interaction with CALM. Interacts with RPS6. Interacts with actin. Interacts with LLPH. Interacts with GLUT4. Interacts (via its IQ motifs) with SH3BGRL3; the interaction is dependent on calcium and takes place at membrane ruffles. Isoform 2 contains a N-acetylmethionine at position 1. As to expression, widely expressed.

It is found in the cytoplasm. It localises to the nucleus. Its subcellular location is the cell cortex. The protein resides in the cell projection. The protein localises to the ruffle membrane. It is found in the cytoplasmic vesicle. It localises to the stereocilium membrane. Its subcellular location is the nucleolus. The protein resides in the nucleoplasm. In terms of biological role, myosins are actin-based motor molecules with ATPase activity. Unconventional myosins serve in intracellular movements. Their highly divergent tails are presumed to bind to membranous compartments, which would be moved relative to actin filaments. Involved in glucose transporter recycling in response to insulin by regulating movement of intracellular GLUT4-containing vesicles to the plasma membrane. Component of the hair cell's (the sensory cells of the inner ear) adaptation-motor complex. Acts as a mediator of adaptation of mechanoelectrical transduction in stereocilia of vestibular hair cells. Binds phosphoinositides and links the actin cytoskeleton to cellular membranes. Functionally, isoform 3 is involved in regulation of transcription. Associated with transcriptional active ribosomal genes. Appears to cooperate with the WICH chromatin-remodeling complex to facilitate transcription. Necessary for the formation of the first phosphodiester bond during transcription initiation. The protein is Unconventional myosin-Ic (MYO1C) of Bos taurus (Bovine).